The primary structure comprises 459 residues: Exodeoxyribonuclease 7 large subunit (459 aa).

The protein belongs to the XseA family. Heterooligomer composed of large and small subunits.

Its subcellular location is the cytoplasm. It catalyses the reaction Exonucleolytic cleavage in either 5'- to 3'- or 3'- to 5'-direction to yield nucleoside 5'-phosphates.. Its function is as follows. Bidirectionally degrades single-stranded DNA into large acid-insoluble oligonucleotides, which are then degraded further into small acid-soluble oligonucleotides. The sequence is that of Exodeoxyribonuclease 7 large subunit from Pseudomonas aeruginosa (strain LESB58).